We begin with the raw amino-acid sequence, 955 residues long: Structure-specific endonuclease subunit SLX4 (955 aa).

Disordered regions lie at residues Q75–S173, P189–R231, G352–R376, E539–I608, P621–R648, A705–D784, and L819–S846. Basic residues predominate over residues R123–R137. Over residues N150–Q159 the composition is skewed to polar residues. The segment covering P189–T198 has biased composition (low complexity). Residues T209 to K225 are compositionally biased toward basic residues. The segment covering G352–Q362 has biased composition (polar residues). The span at E539 to G551 shows a compositional bias: basic and acidic residues. A compositionally biased stretch (polar residues) spans S579–T601. 2 stretches are compositionally biased toward low complexity: residues A705–A720 and K727–S737. Composition is skewed to basic residues over residues P738–K748 and K767–N776. Residues S828 to S841 show a composition bias toward low complexity.

It belongs to the SLX4 family. Forms a heterodimer with SLX1. Phosphorylated in response to DNA damage.

The protein localises to the nucleus. Functionally, regulatory subunit of the SLX1-SLX4 structure-specific endonuclease that resolves DNA secondary structures generated during DNA repair and recombination. Has endonuclease activity towards branched DNA substrates, introducing single-strand cuts in duplex DNA close to junctions with ss-DNA. This Pyricularia oryzae (strain 70-15 / ATCC MYA-4617 / FGSC 8958) (Rice blast fungus) protein is Structure-specific endonuclease subunit SLX4.